Consider the following 327-residue polypeptide: Acetaldehyde dehydrogenase 6 (327 aa).

NAD(+) is bound at residue Ser-15–Ile-18. The active-site Acyl-thioester intermediate is the Cys-133. NAD(+) is bound by residues Ser-164 to Asn-172 and Asn-297.

This sequence belongs to the acetaldehyde dehydrogenase family.

The catalysed reaction is acetaldehyde + NAD(+) + CoA = acetyl-CoA + NADH + H(+). This Rhodococcus opacus (strain B4) protein is Acetaldehyde dehydrogenase 6.